Reading from the N-terminus, the 276-residue chain is Pyridinium-3,5-bisthiocarboxylic acid mononucleotide synthase (276 aa).

The active-site Nucleophile and sulfur donor is Cys176. At Cys176 the chain carries 2,3-didehydroalanine (Cys).

This sequence belongs to the LarE family.

It carries out the reaction pyridinium-3,5-dicarboxylate mononucleotide + [LarE protein]-L-cysteine + ATP = [LarE protein]-dehydroalanine + pyridinium-3-carboxylate-5-thiocarboxylate mononucleotide + AMP + diphosphate + H(+). The enzyme catalyses [LarE protein]-L-cysteine + pyridinium-3-carboxylate-5-thiocarboxylate mononucleotide + ATP = pyridinium-3,5-bisthiocarboxylate mononucleotide + [LarE protein]-dehydroalanine + AMP + diphosphate + H(+). Involved in the biosynthesis of a nickel-pincer cofactor ((SCS)Ni(II) pincer complex). Catalyzes the ATP-dependent incorporation of two sulfur atoms in pyridinium-3,5-biscarboxylic acid mononucleotide (P2CMN) to yield pyridinium-3,5-bisthiocarboxylic acid mononucleotide (P2TMN). The source of sulfur is the enzyme itself: Cys-176 of LarE is the sulfur donor, thereby being converted into dehydroalanine, and is not regenerated in vivo. Thus, two molecules of LarE undergo sacrificial sulfur transfer to create one P2TMN. Binds nickel. Is required for the activation of the lactate racemase LarA. May also be involved in the activation of other nickel-pincer cofactor-dependent enzymes. In Lactiplantibacillus plantarum (strain ATCC BAA-793 / NCIMB 8826 / WCFS1) (Lactobacillus plantarum), this protein is Pyridinium-3,5-bisthiocarboxylic acid mononucleotide synthase.